The following is a 1418-amino-acid chain: Ankyrin repeat and fibronectin type-III domain-containing protein 1 (1418 aa).

Positions 119-236 (RDSVCSLPPP…DRGETPSLSE (118 aa)) are disordered. A compositionally biased stretch (polar residues) spans 144-154 (PENTSINLSQC). Residues 171-186 (SASPTSSTPLRTTSTP) show a composition bias toward low complexity. Basic and acidic residues predominate over residues 223–236 (LRDHDRGETPSLSE). ANK repeat units lie at residues 419 to 450 (QSSE…ELDL) and 456 to 485 (EGLT…KESP). The Fibronectin type-III domain occupies 556–652 (APLMVRLSVT…LSQPPSAVPS (97 aa)). Residues 893-900 (GLYLGYLK) are highly conserved peptide sequence. 3 disordered regions span residues 1134-1179 (VQKN…EVFL), 1321-1343 (LETP…YRQP), and 1361-1418 (KTSP…SSTL). Residues 1136–1146 (KNDSTSSNTDY) show a composition bias toward polar residues. A compositionally biased stretch (polar residues) spans 1407–1418 (NEQVSEILSSTL).

Functionally, required for vestibular-related functions. The sequence is that of Ankyrin repeat and fibronectin type-III domain-containing protein 1 (ankfn1) from Danio rerio (Zebrafish).